The primary structure comprises 336 residues: 4-hydroxy-2-oxovalerate aldolase (336 aa).

The Pyruvate carboxyltransferase domain occupies 5 to 255 (IRIIDSTLRD…ETGVDLYKIM (251 aa)). Substrate is bound at residue 13 to 14 (RD). Asp-14 serves as a coordination point for Mn(2+). His-17 acts as the Proton acceptor in catalysis. Substrate is bound by residues Ser-167 and His-194. Residues His-194 and His-196 each coordinate Mn(2+). Tyr-285 provides a ligand contact to substrate.

Belongs to the 4-hydroxy-2-oxovalerate aldolase family.

The enzyme catalyses (S)-4-hydroxy-2-oxopentanoate = acetaldehyde + pyruvate. The chain is 4-hydroxy-2-oxovalerate aldolase (mhpE) from Carboxydothermus hydrogenoformans (strain ATCC BAA-161 / DSM 6008 / Z-2901).